The primary structure comprises 361 residues: MADAPTFNAQPCDIITQLVLGPVSPRVRNARQASADRWMEIETILHESTRHDGVAPFSEQFLRGMEEPDLNHWHALVRVDGHVRGIAAVDPSGPAVELAVHPSYRRGGLATALQRAVRAHASSLGLGDERDIHTNGIGLTWWAHGDLPPARAAAEHIGATADRELLVMELPGSVVKDESDNNPVAQAAATLPDDVTVLSWTESARRWGKDAVDAAWLAVNNEAFDWHPEQGGWDQARLDQARRASWYDPDGVLLLWGSEGDQKDGDTDSLPPLLGFHWTKLAREGDDETGRKVGEVYVIGLARKAQGRGLGRASTAKGIQYLASNDAAYVELYVEADNAPAVHAYEALGFTVVERHTAWKF.

N-acetyltransferase domains are found at residues 25-173 (PRVR…LPGS) and 195-361 (VTVL…AWKF). Glu-59 serves as a coordination point for 1D-myo-inositol 2-(L-cysteinylamino)-2-deoxy-alpha-D-glucopyranoside. 98 to 100 (LAV) provides a ligand contact to acetyl-CoA. Glu-229, Lys-280, and Glu-295 together coordinate 1D-myo-inositol 2-(L-cysteinylamino)-2-deoxy-alpha-D-glucopyranoside. Residues 299–301 (IGL) and 306–312 (QGRGLGR) each bind acetyl-CoA. A 1D-myo-inositol 2-(L-cysteinylamino)-2-deoxy-alpha-D-glucopyranoside-binding site is contributed by Tyr-333. 338-343 (NAPAVH) provides a ligand contact to acetyl-CoA.

Belongs to the acetyltransferase family. MshD subfamily. In terms of assembly, monomer.

The enzyme catalyses 1D-myo-inositol 2-(L-cysteinylamino)-2-deoxy-alpha-D-glucopyranoside + acetyl-CoA = mycothiol + CoA + H(+). Catalyzes the transfer of acetyl from acetyl-CoA to desacetylmycothiol (Cys-GlcN-Ins) to form mycothiol. The chain is Mycothiol acetyltransferase from Corynebacterium kroppenstedtii (strain DSM 44385 / JCM 11950 / CIP 105744 / CCUG 35717).